The following is a 725-amino-acid chain: Kinesin-like protein KIF2C (725 aa).

Alanine 2 bears the N-acetylalanine mark. The globular stretch occupies residues 2-254 (AMDSSLQARL…CHPLTMTDPI (253 aa)). Phosphoserine occurs at positions 6 and 22. A disordered region spans residues 89 to 116 (QKQKRRSVNSKIPAPKESLRSRSTRMST). Residue serine 95 is modified to Phosphoserine; by AURKB. Residues 98–101 (SKIP) carry the Microtubule tip localization signal motif. Residues serine 106, serine 109, serine 111, serine 115, serine 166, serine 175, serine 187, and serine 192 each carry the phosphoserine modification. The segment at 207–238 (EKKAQNSEMRMKRAQEYDSSFPNWEFARMIKE) is negative regulator of microtubule-binding. The Kinesin motor domain occupies 258–588 (RICVCVRKRP…LRYADRVKEL (331 aa)). ATP is bound by residues arginine 264 and 348-355 (GQTGSGKT). The Nuclear localization signal signature appears at 415–418 (KKAK). 3 positions are modified to phosphoserine: serine 519, serine 621, and serine 633. Positions 618–658 (GNLSKEEEELSSQMSSFNEAMTQIRELEEKAMEELKEIIQQ) form a coiled coil.

It belongs to the TRAFAC class myosin-kinesin ATPase superfamily. Kinesin family. MCAK/KIF2 subfamily. Interacts with CENPH. Interacts with MTUS2/TIP150; the interaction is direct. Interacts with MAPRE1; the interaction is direct, regulated by phosphorylation and is probably required for targeting to growing microtubule plus ends. Interacts with KIF18B at microtubule tips; this interaction increases the affinity of both partners for microtubule plus ends and is required for robust microtubule depolymerization. Phosphorylation by AURKA or AURKB strongly reduces KIF18B-binding. In terms of processing, phosphorylation by AURKB, regulates association with centromeres and kinetochores and the microtubule depolymerization activity. Ubiquitinated. As to expression, expressed at high levels in thymus and testis, at low levels in small intestine, the mucosal lining of colon, and placenta, and at very low levels in spleen and ovary; expression is not detected in prostate, peripheral blood Leukocytes, heart, brain, lung, liver, skeletal muscle, kidney or pancreas. Isoform 2 is testis-specific.

The protein localises to the cytoplasm. It localises to the cytoskeleton. It is found in the nucleus. The protein resides in the chromosome. Its subcellular location is the centromere. The protein localises to the kinetochore. In complex with KIF18B, constitutes the major microtubule plus-end depolymerizing activity in mitotic cells. Regulates the turnover of microtubules at the kinetochore and functions in chromosome segregation during mitosis. Plays a role in chromosome congression and is required for the lateral to end-on conversion of the chromosome-microtubule attachment. This chain is Kinesin-like protein KIF2C (KIF2C), found in Homo sapiens (Human).